Consider the following 568-residue polypeptide: Lipoprotein LpqB (568 aa).

The signal sequence occupies residues 1 to 23 (MSKISTKLKALSAVLSVTTLVAG). Cys-24 carries N-palmitoyl cysteine lipidation. The S-diacylglycerol cysteine moiety is linked to residue Cys-24.

It belongs to the LpqB lipoprotein family.

It is found in the cell membrane. The protein is Lipoprotein LpqB of Corynebacterium glutamicum (strain R).